The chain runs to 87 residues: Exodeoxyribonuclease 7 small subunit (87 aa).

The protein belongs to the XseB family. Heterooligomer composed of large and small subunits.

The protein localises to the cytoplasm. It carries out the reaction Exonucleolytic cleavage in either 5'- to 3'- or 3'- to 5'-direction to yield nucleoside 5'-phosphates.. Its function is as follows. Bidirectionally degrades single-stranded DNA into large acid-insoluble oligonucleotides, which are then degraded further into small acid-soluble oligonucleotides. The sequence is that of Exodeoxyribonuclease 7 small subunit from Solidesulfovibrio magneticus (strain ATCC 700980 / DSM 13731 / RS-1) (Desulfovibrio magneticus).